Reading from the N-terminus, the 805-residue chain is Transmembrane channel-like protein 6 (805 aa).

The disordered stretch occupies residues 1–29 (MAQPLAFILDVPETPGDQGQGPSPYDESE). Over 1 to 209 (MAQPLAFILD…SCCGRLRYAC (209 aa)) the chain is Lumenal. Thr-89 is modified (phosphothreonine). At Arg-94 the chain carries Omega-N-methylarginine. An N-linked (GlcNAc...) asparagine glycan is attached at Asn-103. Thr-105 carries the post-translational modification Phosphothreonine. A helical transmembrane segment spans residues 210–230 (VLALHSLGLALLSALQALMPW). Topologically, residues 231–249 (RYALKRIGGQFGSSVLSYF) are cytoplasmic. The chain crosses the membrane as a helical span at residues 250 to 270 (LFLKTLLAFNALLLLLLVAFI). The Lumenal segment spans residues 271 to 338 (MGPQVAFPPA…TPRVGGLPYN (68 aa)). Asn-312 carries an N-linked (GlcNAc...) asparagine glycan. A helical transmembrane segment spans residues 339–359 (MPLAYLSTVGVSFFITCITLV). Residues 360–431 (YSMAHSFGES…RSVCGRLRQA (72 aa)) lie on the Cytoplasmic side of the membrane. A helical membrane pass occupies residues 432 to 452 (AVLGLVWLLCLGTALGCAVAV). Residues 453–469 (HVFSEFMIQSPEAAGQE) are Lumenal-facing. Residues 470-490 (AVLLVLPLVVGLLNLGAPYLC) form a helical membrane-spanning segment. Over 491–505 (RVLAALEPHDSPVLE) the chain is Cytoplasmic. The chain crosses the membrane as a helical span at residues 506–526 (VYVAICRNLILKLAILGTLCY). Residues 527-553 (HWLGRRVGVLQGQCWEDFVGQELYRFL) lie on the Lumenal side of the membrane. Residues 554–574 (VMDFVLMLLDTLFGELVWRII) traverse the membrane as a helical segment. The Cytoplasmic segment spans residues 575–604 (SEKKLKRRRKPEFDIARNVLELIYGQTLTW). Residues 605–625 (LGVLFSPLLPAVQIIKLLLVF) form a helical membrane-spanning segment. The Lumenal portion of the chain corresponds to 626–650 (YVKKTSLLANCQAPRRPWLASHMST). A helical transmembrane segment spans residues 651-671 (VFLTLLCFPAFLGAAVFLCYA). The Cytoplasmic segment spans residues 672–722 (VWQVKPSSTCGPFRTLDTMYEAGRVWVRHLEAAGPRVSWLPWVHRYLMENT). Residues 723 to 743 (FFVFLVSALLLAVIYLNIQVV) traverse the membrane as a helical segment. Over 744-805 (RGQRKVICLL…PALLTDEQDA (62 aa)) the chain is Lumenal. Residues 778–805 (KEREERSRVGTTEEAAAPPALLTDEQDA) are disordered.

This sequence belongs to the TMC family. In terms of assembly, interacts with TMC8. Interacts and forms a complex with TMC8 and CIB1; the interaction stabilizes each component of the complex. Interacts and forms a complex with TMC8 and SLC30A1/ZNT1; the interaction regulates zinc transport into the ER. (Microbial infection) Interacts with human papillomavirus 16/HPV16 protein E5; the interaction alleviates TMC6-mediated transcription factors inhibition. As to expression, expressed in placenta, prostate, testis, activated T-lymphocytes and lymphokine-activated killer (LAK) lymphocytes.

It localises to the endoplasmic reticulum membrane. It is found in the golgi apparatus membrane. The protein resides in the nucleus membrane. Acts as a regulatory protein involved in the regulation of numerous cellular processes. Together with its homolog TMC8/EVER2, forms a complex with CIB1 in lymphocytes and keratynocytes where TMC6 and TMC8 stabilize CIB1 and reciprocally. Together with TMC8, also forms a complex with and activates zinc transporter ZNT1 at the ER membrane of keratynocytes, thereby facilitating zinc uptake into the ER. Down-regulates the activity of transcription factors induced by zinc and cytokines. Also plays a role in thermal sensation by inhibiting the M-channel (KCNQ2-KCNQ3 channel) current in primary sensory neurons. This Homo sapiens (Human) protein is Transmembrane channel-like protein 6.